The primary structure comprises 315 residues: Ester hydrolase C11orf54 (315 aa).

Zn(2+) contacts are provided by H266, H268, and H278.

In terms of assembly, monomer. It depends on Zn(2+) as a cofactor.

The protein localises to the nucleus. Its subcellular location is the cytoplasm. Functionally, exhibits ester hydrolase activity on the substrate p-nitrophenyl acetate, in vitro. Regulates DNA damage and repair by regulating HIF1A degradation via chaperone-mediated autophagy (CMA). Probably non-functional. The polypeptide is Ester hydrolase C11orf54 (C11orf54) (Homo sapiens (Human)).